We begin with the raw amino-acid sequence, 415 residues long: Mannosylglycerate hydrolase (415 aa).

Residues Tyr23, Trp27–Asp30, Tyr76, Gln98, and Gly158 each bind substrate. The active-site Proton donor is Asp160. Substrate contacts are provided by residues Arg193 and Tyr344–Trp345. Glu388 (proton acceptor) is an active-site residue.

Belongs to the glycosyl hydrolase 63 family. In terms of assembly, homotetramer in solution.

It catalyses the reaction (2R)-2-O-(alpha-D-mannosyl)-glycerate + H2O = D-mannose + (R)-glycerate. It carries out the reaction (2R)-2-O-(alpha-D-glucopyranosyl)-glycerate + H2O = (R)-glycerate + D-glucose. With respect to regulation, activity is not stimulated by divalent cations and not affected in the presence of EDTA. Hydrolase that catalyzes the hydrolysis of mannosylglycerate (MG), a solute produced in response to osmotic stress in thermophiles, into mannose and glycerate. Can also hydrolyze glucosylglycerate (GG) to glucose and glycerate, with similar catalytic efficiency. Is highly specific for MG and GG, and cannot use mannosylglyceramide (MGA), glucosylglycerol, mannosylglucosylglycerate (MGG), glucosylglucosylglycerate (GGG) or trehalose as substrates. In Thermus thermophilus (strain ATCC BAA-163 / DSM 7039 / HB27), this protein is Mannosylglycerate hydrolase.